The primary structure comprises 758 residues: 5-methyltetrahydropteroyltriglutamate--homocysteine methyltransferase (758 aa).

Residues Arg17 to Lys20 and Lys117 contribute to the 5-methyltetrahydropteroyltri-L-glutamate site. L-homocysteine contacts are provided by residues Ile434–Ser436 and Glu487. L-methionine-binding positions include Ile434–Ser436 and Glu487. 5-methyltetrahydropteroyltri-L-glutamate contacts are provided by residues Arg518–Cys519 and Trp564. Asp602 is a binding site for L-homocysteine. Position 602 (Asp602) interacts with L-methionine. 5-methyltetrahydropteroyltri-L-glutamate is bound at residue Glu608. His644, Cys646, and Glu668 together coordinate Zn(2+). The Proton donor role is filled by His697. Zn(2+) is bound at residue Cys729.

This sequence belongs to the vitamin-B12 independent methionine synthase family. It depends on Zn(2+) as a cofactor.

It carries out the reaction 5-methyltetrahydropteroyltri-L-glutamate + L-homocysteine = tetrahydropteroyltri-L-glutamate + L-methionine. Its pathway is amino-acid biosynthesis; L-methionine biosynthesis via de novo pathway; L-methionine from L-homocysteine (MetE route): step 1/1. Its function is as follows. Catalyzes the transfer of a methyl group from 5-methyltetrahydrofolate to homocysteine resulting in methionine formation. This chain is 5-methyltetrahydropteroyltriglutamate--homocysteine methyltransferase, found in Yersinia enterocolitica serotype O:8 / biotype 1B (strain NCTC 13174 / 8081).